The primary structure comprises 375 residues: 23S rRNA (uracil(747)-C(5))-methyltransferase RlmC (375 aa).

Residues cysteine 3, cysteine 11, cysteine 14, and cysteine 87 each contribute to the [4Fe-4S] cluster site. Glutamine 212, phenylalanine 241, glutamate 262, and asparagine 307 together coordinate S-adenosyl-L-methionine. Residue cysteine 334 is the Nucleophile of the active site.

This sequence belongs to the class I-like SAM-binding methyltransferase superfamily. RNA M5U methyltransferase family. RlmC subfamily.

The enzyme catalyses uridine(747) in 23S rRNA + S-adenosyl-L-methionine = 5-methyluridine(747) in 23S rRNA + S-adenosyl-L-homocysteine + H(+). Its function is as follows. Catalyzes the formation of 5-methyl-uridine at position 747 (m5U747) in 23S rRNA. The sequence is that of 23S rRNA (uracil(747)-C(5))-methyltransferase RlmC from Escherichia coli O127:H6 (strain E2348/69 / EPEC).